Consider the following 268-residue polypeptide: Undecaprenyl-diphosphatase (268 aa).

7 helical membrane passes run 5–25 (TIAQ…IPVS), 43–63 (GKAF…SVYA), 84–104 (LGIL…YQII), 107–127 (VLFE…IVLL), 184–204 (AAEF…AYDL), 214–234 (ADLQ…VLVV), and 247–267 (ALFG…VLVL).

The protein belongs to the UppP family.

It is found in the cell inner membrane. It carries out the reaction di-trans,octa-cis-undecaprenyl diphosphate + H2O = di-trans,octa-cis-undecaprenyl phosphate + phosphate + H(+). In terms of biological role, catalyzes the dephosphorylation of undecaprenyl diphosphate (UPP). Confers resistance to bacitracin. This Chelativorans sp. (strain BNC1) protein is Undecaprenyl-diphosphatase.